The primary structure comprises 375 residues: Carbamoyl phosphate synthase small chain (375 aa).

The interval 1-180 is CPSase; the sequence is MSKALLVLED…DAYVVEPKGK (180 aa). 3 residues coordinate L-glutamine: S46, G232, and G234. One can recognise a Glutamine amidotransferase type-1 domain in the interval 184–375; the sequence is TVAALDLGIK…SFVELMAAQR (192 aa). Residue C260 is the Nucleophile of the active site. F261, Q264, N302, G304, and F305 together coordinate L-glutamine. Active-site residues include H350 and E352.

It belongs to the CarA family. In terms of assembly, composed of two chains; the small (or glutamine) chain promotes the hydrolysis of glutamine to ammonia, which is used by the large (or ammonia) chain to synthesize carbamoyl phosphate. Tetramer of heterodimers (alpha,beta)4.

It catalyses the reaction hydrogencarbonate + L-glutamine + 2 ATP + H2O = carbamoyl phosphate + L-glutamate + 2 ADP + phosphate + 2 H(+). The enzyme catalyses L-glutamine + H2O = L-glutamate + NH4(+). It functions in the pathway amino-acid biosynthesis; L-arginine biosynthesis; carbamoyl phosphate from bicarbonate: step 1/1. The protein operates within pyrimidine metabolism; UMP biosynthesis via de novo pathway; (S)-dihydroorotate from bicarbonate: step 1/3. Small subunit of the glutamine-dependent carbamoyl phosphate synthetase (CPSase). CPSase catalyzes the formation of carbamoyl phosphate from the ammonia moiety of glutamine, carbonate, and phosphate donated by ATP, constituting the first step of 2 biosynthetic pathways, one leading to arginine and/or urea and the other to pyrimidine nucleotides. The small subunit (glutamine amidotransferase) binds and cleaves glutamine to supply the large subunit with the substrate ammonia. The sequence is that of Carbamoyl phosphate synthase small chain from Mycobacterium leprae (strain TN).